The following is a 427-amino-acid chain: Adenylosuccinate synthetase (427 aa).

GTP-binding positions include 12–18 (GDEGKGK) and 40–42 (GHT). Asp13 acts as the Proton acceptor in catalysis. Positions 13 and 40 each coordinate Mg(2+). IMP-binding positions include 13 to 16 (DEGK), 38 to 41 (NAGH), Thr128, Arg142, Gln223, Thr238, and Arg302. His41 serves as the catalytic Proton donor. Residue 298 to 304 (TTTGRPR) participates in substrate binding. GTP-binding positions include Arg304, 330 to 332 (SID), and 412 to 414 (SVG).

The protein belongs to the adenylosuccinate synthetase family. As to quaternary structure, homodimer. It depends on Mg(2+) as a cofactor.

Its subcellular location is the cytoplasm. The enzyme catalyses IMP + L-aspartate + GTP = N(6)-(1,2-dicarboxyethyl)-AMP + GDP + phosphate + 2 H(+). It functions in the pathway purine metabolism; AMP biosynthesis via de novo pathway; AMP from IMP: step 1/2. In terms of biological role, plays an important role in the de novo pathway of purine nucleotide biosynthesis. Catalyzes the first committed step in the biosynthesis of AMP from IMP. The sequence is that of Adenylosuccinate synthetase from Staphylococcus aureus (strain N315).